We begin with the raw amino-acid sequence, 500 residues long: Protein nucleotidyltransferase YdiU (500 aa).

Positions 96, 98, 99, 119, 131, 132, 182, and 189 each coordinate ATP. Aspartate 258 (proton acceptor) is an active-site residue. Residues asparagine 259 and aspartate 268 each contribute to the Mg(2+) site. Position 268 (aspartate 268) interacts with ATP.

Belongs to the SELO family. It depends on Mg(2+) as a cofactor. The cofactor is Mn(2+).

The catalysed reaction is L-seryl-[protein] + ATP = 3-O-(5'-adenylyl)-L-seryl-[protein] + diphosphate. It carries out the reaction L-threonyl-[protein] + ATP = 3-O-(5'-adenylyl)-L-threonyl-[protein] + diphosphate. It catalyses the reaction L-tyrosyl-[protein] + ATP = O-(5'-adenylyl)-L-tyrosyl-[protein] + diphosphate. The enzyme catalyses L-histidyl-[protein] + UTP = N(tele)-(5'-uridylyl)-L-histidyl-[protein] + diphosphate. The catalysed reaction is L-seryl-[protein] + UTP = O-(5'-uridylyl)-L-seryl-[protein] + diphosphate. It carries out the reaction L-tyrosyl-[protein] + UTP = O-(5'-uridylyl)-L-tyrosyl-[protein] + diphosphate. In terms of biological role, nucleotidyltransferase involved in the post-translational modification of proteins. It can catalyze the addition of adenosine monophosphate (AMP) or uridine monophosphate (UMP) to a protein, resulting in modifications known as AMPylation and UMPylation. The protein is Protein nucleotidyltransferase YdiU of Rhizobium etli (strain CIAT 652).